We begin with the raw amino-acid sequence, 187 residues long: Elongation factor P (187 aa).

Belongs to the elongation factor P family.

It is found in the cytoplasm. The protein operates within protein biosynthesis; polypeptide chain elongation. Functionally, involved in peptide bond synthesis. Stimulates efficient translation and peptide-bond synthesis on native or reconstituted 70S ribosomes in vitro. Probably functions indirectly by altering the affinity of the ribosome for aminoacyl-tRNA, thus increasing their reactivity as acceptors for peptidyl transferase. The sequence is that of Elongation factor P from Rhodococcus jostii (strain RHA1).